The following is a 311-amino-acid chain: ATP synthase subunit a (311 aa).

The next 6 membrane-spanning stretches (helical) occupy residues 62–82 (AVHV…GFIF), 123–143 (IAPM…MDLI), 170–190 (DPNA…MFSI), 213–233 (LWYL…VALI), 253–273 (IFIL…VGGV), and 276–296 (WAWA…FMVL).

This sequence belongs to the ATPase A chain family. As to quaternary structure, F-type ATPases have 2 components, CF(1) - the catalytic core - and CF(0) - the membrane proton channel. CF(1) has five subunits: alpha(3), beta(3), gamma(1), delta(1), epsilon(1). CF(0) has three main subunits: a(1), b(2) and c(9-12). The alpha and beta chains form an alternating ring which encloses part of the gamma chain. CF(1) is attached to CF(0) by a central stalk formed by the gamma and epsilon chains, while a peripheral stalk is formed by the delta and b chains.

Its subcellular location is the cell inner membrane. Its function is as follows. Key component of the proton channel; it plays a direct role in the translocation of protons across the membrane. In Saccharophagus degradans (strain 2-40 / ATCC 43961 / DSM 17024), this protein is ATP synthase subunit a.